The primary structure comprises 527 residues: Cyclin-L1 (527 aa).

Residues 1–37 are disordered; the sequence is MASGPHPTSTAAAASASSAAPSAGGSSSGTTTTTTTT. Cyclin-like regions lie at residues 89-191 and 204-288; these read ELIQ…RVLK and KIIV…ETLR. Thr326 carries the post-translational modification Phosphothreonine. The tract at residues 327-527 is disordered; it reads PALSTLGGFS…SRSGHGRHRR (201 aa). A phosphoserine mark is found at Ser336 and Ser339. Glycyl lysine isopeptide (Lys-Gly) (interchain with G-Cter in SUMO2) cross-links involve residues Lys340 and Lys348. Positions 343-353 are enriched in basic and acidic residues; that stretch reads SPREVKAEEKS. 2 positions are modified to phosphoserine: Ser353 and Ser356. Over residues 362–371 the composition is skewed to basic and acidic residues; that stretch reads VKKEPEDRQQ. Lys363 is covalently cross-linked (Glycyl lysine isopeptide (Lys-Gly) (interchain with G-Cter in SUMO2)). The residue at position 375 (Ser375) is a Phosphoserine. Composition is skewed to basic residues over residues 383–419, 439–453, 461–477, and 487–499; these read DSKRSRNSRSASRSRSRTRSRSRSHTPRRHYNNRRSR, RRHHNHGSPHLKAKH, SNRHGHKRKKSRSRSQS, and KKHRHERGHHRDR. The segment at 391 to 433 is RS; the sequence is RSASRSRSRTRSRSRSHTPRRHYNNRRSRSGTYSSRSRSRSRS. Phosphoserine is present on Ser446. Basic and acidic residues predominate over residues 500 to 509; that stretch reads RERSRSFERS. A compositionally biased stretch (basic residues) spans 510 to 527; that stretch reads HKGKHHGGSRSGHGRHRR.

The protein belongs to the cyclin family. Cyclin L subfamily. In terms of assembly, interacts with POLR2A via its hyperphosphorylated C-terminal domain (CTD). Interacts with CDK11A, CDK11B, CDK12 and CDK13. May form a ternary complex with CDK11B and casein kinase II (CKII). Interacts with pre-mRNA-splicing factors, including at least SRSF1, SRSF2 AND SRSF7/SLU7. As to expression, ubiquitous with higher level in liver; expressed in striatal neurons.

It localises to the nucleus speckle. The protein localises to the nucleus. Its subcellular location is the nucleoplasm. In terms of biological role, involved in pre-mRNA splicing. Functions in association with cyclin-dependent kinases (CDKs). May play a role in the regulation of RNA polymerase II (pol II). Inhibited by the CDK-specific inhibitor CDKN1A/p21. The polypeptide is Cyclin-L1 (Ccnl1) (Rattus norvegicus (Rat)).